A 274-amino-acid polypeptide reads, in one-letter code: MNSKNYHQKKRFGQHWLVNKKILEKIKEIAVLNENDFILEIGPGKGALTAKLLDSKIKKLHAVELDNDLINLLNDKFNNNDKFSLQHGDILSVNLDSINKKITKVIANIPYNITGPILDIFIGRLGIIRNCNYEKIIFLMQKDVVDRILSKEGSPNAGALSIRMQLLSKIKKICDVPPSSFSPPPKVFSSLVVFEPINDNLRLDISLEKYIDKLLRISFNSRRKMLRNTLNSILSNEEMNELSESSKVCFKLRPQDISINQWIKLAENCIKIKK.

Positions 15, 17, 42, 64, 89, and 108 each coordinate S-adenosyl-L-methionine.

It belongs to the class I-like SAM-binding methyltransferase superfamily. rRNA adenine N(6)-methyltransferase family. RsmA subfamily.

The protein localises to the cytoplasm. The catalysed reaction is adenosine(1518)/adenosine(1519) in 16S rRNA + 4 S-adenosyl-L-methionine = N(6)-dimethyladenosine(1518)/N(6)-dimethyladenosine(1519) in 16S rRNA + 4 S-adenosyl-L-homocysteine + 4 H(+). Its function is as follows. Specifically dimethylates two adjacent adenosines (A1518 and A1519) in the loop of a conserved hairpin near the 3'-end of 16S rRNA in the 30S particle. May play a critical role in biogenesis of 30S subunits. This chain is Ribosomal RNA small subunit methyltransferase A, found in Prochlorococcus marinus (strain MIT 9215).